Consider the following 517-residue polypeptide: MAVWQAASGKVYLPPSTPVARVQSTDEYVQRTNIYYHAYSDRLLTVGHPYFNVYNVQGSKLQIPKVSGNQHRVFRLKLPDPNRFALADMSVYNPDKERLVWACRGIEIGRGQPLGVGSVGHPLFNKVGDTENPNSYKASSTDDRQNVSFDPKQLQMFIIGCAPCIGEHWDKALPCDDGNIQQGSCPPIELINSVIEDGDMADIGYGNLNFKALQQNRADVSLDIVNETCKYPDFLKMQNDVYGDSCFFYARREQCYARHFFVRGGKTGDDIPAGQIDEGSMKNAFYIPPNSSQAQYNNLGNSMYFPTVSGSLVSSDAQLFNRPFWLQRAQGHNNGICWFNQLFVTVVDNTRNTNFSISINSDGTDVSKITDYNSQKFTEYLRHVEEYELSLILQLCKVPLKAEILAQINAMNSNILEEWQLGFVPAPDNSIQDTYRYIDSLATRCPDKNPPKEKVDPYKNLHFWDVDLTERLSLDLDQYSLGRKFLFQAGLQQTTVNGTKTVSSRISTRGIKRKRKN.

Belongs to the papillomaviridae L1 protein family. As to quaternary structure, self-assembles into homopentamers. The capsid has an icosahedral symmetry and consists of 72 capsomers, with each capsomer being a pentamer of L1. Interacts with the minor capsid protein L2; this interaction is necessary for viral genome encapsidation. Interacts with protein E2; this interaction enhances E2-dependent replication and transcription activation.

It is found in the virion. The protein resides in the host nucleus. Its function is as follows. Forms an icosahedral capsid with a T=7 symmetry and a 50 nm diameter. The capsid is composed of 72 pentamers linked to each other by disulfide bonds and associated with L2 proteins. Binds to heparan sulfate proteoglycans on cell surface of basal layer keratinocytes to provide initial virion attachment. This binding mediates a conformational change in the virus capsid that facilitates efficient infection. The virion enters the host cell via endocytosis. During virus trafficking, L1 protein dissociates from the viral DNA and the genomic DNA is released to the host nucleus. The virion assembly takes place within the cell nucleus. Encapsulates the genomic DNA together with protein L2. In Human papillomavirus 25, this protein is Major capsid protein L1.